Here is a 427-residue protein sequence, read N- to C-terminus: Serine--tRNA ligase (427 aa).

Thr-231–Glu-233 serves as a coordination point for L-serine. Arg-262–Glu-264 provides a ligand contact to ATP. Glu-285 contacts L-serine. Residue Glu-349 to Ser-352 participates in ATP binding. Ser-385 contacts L-serine.

Belongs to the class-II aminoacyl-tRNA synthetase family. Type-1 seryl-tRNA synthetase subfamily. Homodimer. The tRNA molecule binds across the dimer.

It localises to the cytoplasm. The enzyme catalyses tRNA(Ser) + L-serine + ATP = L-seryl-tRNA(Ser) + AMP + diphosphate + H(+). It carries out the reaction tRNA(Sec) + L-serine + ATP = L-seryl-tRNA(Sec) + AMP + diphosphate + H(+). The protein operates within aminoacyl-tRNA biosynthesis; selenocysteinyl-tRNA(Sec) biosynthesis; L-seryl-tRNA(Sec) from L-serine and tRNA(Sec): step 1/1. Functionally, catalyzes the attachment of serine to tRNA(Ser). Is also able to aminoacylate tRNA(Sec) with serine, to form the misacylated tRNA L-seryl-tRNA(Sec), which will be further converted into selenocysteinyl-tRNA(Sec). The chain is Serine--tRNA ligase from Listeria welshimeri serovar 6b (strain ATCC 35897 / DSM 20650 / CCUG 15529 / CIP 8149 / NCTC 11857 / SLCC 5334 / V8).